The sequence spans 2290 residues: Protein Ycf2 (2290 aa).

1644–1651 lines the ATP pocket; it reads GSIGTGRS.

This sequence belongs to the Ycf2 family.

It localises to the plastid. The protein resides in the chloroplast stroma. Functionally, probable ATPase of unknown function. Its presence in a non-photosynthetic plant (Epifagus virginiana) and experiments in tobacco indicate that it has an essential function which is probably not related to photosynthesis. The chain is Protein Ycf2 from Nasturtium officinale (Watercress).